We begin with the raw amino-acid sequence, 423 residues long: uncharacterized protein (423 aa).

Mg(2+) is bound by residues Lys-181, Asp-183, and Glu-184. Position 181 is an N6-carboxylysine (Lys-181).

It belongs to the RuBisCO large chain family. Type IV subfamily. It depends on Mg(2+) as a cofactor.

In terms of biological role, may be involved in sulfur metabolism and oxidative stress response. Does not show RuBisCO activity. This is an uncharacterized protein from Bordetella bronchiseptica (strain ATCC BAA-588 / NCTC 13252 / RB50) (Alcaligenes bronchisepticus).